We begin with the raw amino-acid sequence, 215 residues long: 3-isopropylmalate dehydratase small subunit (215 aa).

It belongs to the LeuD family. LeuD type 1 subfamily. Heterodimer of LeuC and LeuD.

It catalyses the reaction (2R,3S)-3-isopropylmalate = (2S)-2-isopropylmalate. The protein operates within amino-acid biosynthesis; L-leucine biosynthesis; L-leucine from 3-methyl-2-oxobutanoate: step 2/4. Functionally, catalyzes the isomerization between 2-isopropylmalate and 3-isopropylmalate, via the formation of 2-isopropylmaleate. The polypeptide is 3-isopropylmalate dehydratase small subunit (Xylella fastidiosa (strain M23)).